Reading from the N-terminus, the 309-residue chain is Probable manganese-dependent inorganic pyrophosphatase (309 aa).

Mn(2+) contacts are provided by His9, Asp13, Asp15, Asp75, His97, and Asp149.

The protein belongs to the PPase class C family. Requires Mn(2+) as cofactor.

It is found in the cytoplasm. The catalysed reaction is diphosphate + H2O = 2 phosphate + H(+). This Bacillus cereus (strain B4264) protein is Probable manganese-dependent inorganic pyrophosphatase.